The sequence spans 284 residues: MARLVRVARSSSLFGFGNRFYSTSAEASHASSPSPFLHGGGASRVAPKDRNVQWVFLGCPGVGKGTYASRLSTLLGVPHIATGDLVREELASSGPLSQKLSEIVNQGKLVSDEIIVDLLSKRLEAGEARGESGFILDGFPRTMRQAEILGDVTDIDLVVNLKLPEEVLVDKCLGRRTCSQCGKGFNVAHINLKGENGRPGISMDPLLPPHQCMSKLVTRADDTEEVVKARLRIYNETSQPLEEYYRTKGKLMEFDLPGGIPESWPRLLEALRLDDYEEKQSVAA.

Residues 1–36 constitute a chloroplast transit peptide; the sequence is MARLVRVARSSSLFGFGNRFYSTSAEASHASSPSPF. 61–66 is a binding site for ATP; sequence GVGKGT. The tract at residues 81-110 is NMP; that stretch reads ATGDLVREELASSGPLSQKLSEIVNQGKLV. Residues T82, R87, 108 to 110, 138 to 141, and Q145 each bind AMP; these read KLV and GFPR. Residues 174-222 form an LID region; that stretch reads GRRTCSQCGKGFNVAHINLKGENGRPGISMDPLLPPHQCMSKLVTRADD. R175 provides a ligand contact to ATP. R219 and R230 together coordinate AMP. G258 is an ATP binding site.

It belongs to the adenylate kinase family. Monomer. In terms of tissue distribution, highly expressed in flowers and at lower levels in roots, leaves and stems.

The protein resides in the plastid. Its subcellular location is the chloroplast stroma. The enzyme catalyses AMP + ATP = 2 ADP. Catalyzes the reversible transfer of the terminal phosphate group between ATP and AMP. Plays an important role in cellular energy homeostasis, adenine nucleotide metabolism and plant growth. In Arabidopsis thaliana (Mouse-ear cress), this protein is Adenylate kinase 1, chloroplastic (ADK).